A 258-amino-acid polypeptide reads, in one-letter code: NAD kinase (258 aa).

Asp-51 (proton acceptor) is an active-site residue. NAD(+) contacts are provided by residues 51 to 52, Arg-56, 119 to 120, Lys-130, Asp-149, 160 to 165, and Ala-184; these read DG, ND, and TAYSLS.

Belongs to the NAD kinase family. It depends on a divalent metal cation as a cofactor.

It is found in the cytoplasm. The catalysed reaction is NAD(+) + ATP = ADP + NADP(+) + H(+). Functionally, involved in the regulation of the intracellular balance of NAD and NADP, and is a key enzyme in the biosynthesis of NADP. Catalyzes specifically the phosphorylation on 2'-hydroxyl of the adenosine moiety of NAD to yield NADP. The polypeptide is NAD kinase (Thermotoga neapolitana (strain ATCC 49049 / DSM 4359 / NBRC 107923 / NS-E)).